The following is a 155-amino-acid chain: Ribosome maturation factor RimP (155 aa).

The protein belongs to the RimP family.

The protein resides in the cytoplasm. Functionally, required for maturation of 30S ribosomal subunits. The protein is Ribosome maturation factor RimP of Gemmatimonas aurantiaca (strain DSM 14586 / JCM 11422 / NBRC 100505 / T-27).